The primary structure comprises 1087 residues: Collagen alpha-2(I) chain (1087 aa).

Positions 1-931 (APDPGPGPMG…PGPAGGGYDV (931 aa)) are disordered. Composition is skewed to low complexity over residues 83 to 120 (EPGA…AAGP), 150 to 159 (EPGPNGAVGP), and 166 to 187 (PGNN…AGAP). The segment covering 189-199 (FPGPRGGPGPQ) has biased composition (pro residues). Residues 201–211 (PQGAAGQRGLA) are compositionally biased toward low complexity. Positions 218 to 227 (GVKGDGGPKG) are enriched in gly residues. Composition is skewed to low complexity over residues 228–241 (EPGN…PGPQ), 278–321 (AAGP…AGPS), 335–345 (PRGQPGNLGFP), 360–384 (KGAT…TGAT), and 396–408 (QGAA…QGLP). A compositionally biased stretch (gly residues) spans 409–418 (GPAGGAGEAG). The segment covering 443–453 (NPGAAGASGPQ) has biased composition (low complexity). Gly residues predominate over residues 466–493 (GTDGGKGEPGAAGAAGGPGHQGPGGMPG). Residues 504–515 (KGEKGEAGHRGP) show a composition bias toward basic and acidic residues. Composition is skewed to low complexity over residues 560–602 (PAGA…TGAR), 613–640 (FPGA…PAGK), and 677–695 (PGPA…LGLQ). Positions 708–717 (GSPGGAGAVG) are enriched in gly residues. Composition is skewed to low complexity over residues 718–740 (EPGR…LGLP) and 776–788 (PGSS…AGAP). Over residues 792-812 (GPSGGAGRGNRGESGPGGAAG) the composition is skewed to gly residues. The segment covering 813-828 (AVGPAGARGAAGPSGP) has biased composition (low complexity). The span at 829–843 (RGEKGVAGEKGERGL) shows a compositional bias: basic and acidic residues. Composition is skewed to low complexity over residues 849 to 868 (LQGM…AGPN) and 897 to 909 (APGA…YVGP). Over residues 910–924 (AGPPGSPGLPGPPGP) the composition is skewed to pro residues. Residues 929–1087 (YDVSGYDEYR…GLDLGPVCFK (159 aa)) enclose the Fibrillar collagen NC1 domain.

The protein belongs to the fibrillar collagen family.

It is found in the secreted. Its subcellular location is the extracellular space. The protein localises to the extracellular matrix. The chain is Collagen alpha-2(I) chain from Epinephelus costae (Goldblotch grouper).